Consider the following 557-residue polypeptide: Potassium-transporting ATPase potassium-binding subunit (557 aa).

12 consecutive transmembrane segments (helical) span residues 5–25 (GFLL…PLGS), 63–83 (LCAI…MLLG), 132–152 (GLTV…FAFI), 170–190 (LLRI…LFFI), 253–273 (FVQM…FGEV), 283–303 (LLWA…WAEV), 329–349 (VLVS…AVIA), 356–376 (ALGG…FGGV), 379–399 (GLYG…LMIG), 416–436 (LTAL…ALAM), 484–504 (LLAF…MAIA), and 526–546 (LFVG…FIPA).

The protein belongs to the KdpA family. The system is composed of three essential subunits: KdpA, KdpB and KdpC.

Its subcellular location is the cell inner membrane. Its function is as follows. Part of the high-affinity ATP-driven potassium transport (or Kdp) system, which catalyzes the hydrolysis of ATP coupled with the electrogenic transport of potassium into the cytoplasm. This subunit binds the periplasmic potassium ions and delivers the ions to the membrane domain of KdpB through an intramembrane tunnel. This chain is Potassium-transporting ATPase potassium-binding subunit, found in Shigella boydii serotype 4 (strain Sb227).